The following is a 297-amino-acid chain: Aspartate carbamoyltransferase catalytic subunit (297 aa).

Carbamoyl phosphate contacts are provided by Arg49 and Thr50. Lys77 lines the L-aspartate pocket. Residues Arg99, His129, and Gln132 each coordinate carbamoyl phosphate. Residues Arg162 and Arg215 each contribute to the L-aspartate site. Carbamoyl phosphate-binding residues include Gly256 and Pro257.

It belongs to the aspartate/ornithine carbamoyltransferase superfamily. ATCase family. As to quaternary structure, heterododecamer (2C3:3R2) of six catalytic PyrB chains organized as two trimers (C3), and six regulatory PyrI chains organized as three dimers (R2).

It carries out the reaction carbamoyl phosphate + L-aspartate = N-carbamoyl-L-aspartate + phosphate + H(+). The protein operates within pyrimidine metabolism; UMP biosynthesis via de novo pathway; (S)-dihydroorotate from bicarbonate: step 2/3. Its function is as follows. Catalyzes the condensation of carbamoyl phosphate and aspartate to form carbamoyl aspartate and inorganic phosphate, the committed step in the de novo pyrimidine nucleotide biosynthesis pathway. In Legionella pneumophila subsp. pneumophila (strain Philadelphia 1 / ATCC 33152 / DSM 7513), this protein is Aspartate carbamoyltransferase catalytic subunit.